The sequence spans 277 residues: Tryptophan synthase alpha chain (277 aa).

Residues E43 and E54 each act as proton acceptor in the active site.

This sequence belongs to the TrpA family. In terms of assembly, tetramer of two alpha and two beta chains.

The catalysed reaction is (1S,2R)-1-C-(indol-3-yl)glycerol 3-phosphate + L-serine = D-glyceraldehyde 3-phosphate + L-tryptophan + H2O. It participates in amino-acid biosynthesis; L-tryptophan biosynthesis; L-tryptophan from chorismate: step 5/5. In terms of biological role, the alpha subunit is responsible for the aldol cleavage of indoleglycerol phosphate to indole and glyceraldehyde 3-phosphate. The chain is Tryptophan synthase alpha chain from Haloferax volcanii (strain ATCC 29605 / DSM 3757 / JCM 8879 / NBRC 14742 / NCIMB 2012 / VKM B-1768 / DS2) (Halobacterium volcanii).